A 482-amino-acid polypeptide reads, in one-letter code: tRNA sulfurtransferase (482 aa).

A THUMP domain is found at 61–165; the sequence is PAIRDALTRI…NDRLLLVKGR (105 aa). ATP-binding positions include 183 to 184, K265, G287, and Q296; that span reads LI. A disulfide bridge links C344 with C456. Positions 404–482 constitute a Rhodanese domain; the sequence is FGANDAILDI…GFSNVKVYRP (79 aa). C456 functions as the Cysteine persulfide intermediate in the catalytic mechanism.

The protein belongs to the ThiI family.

The protein localises to the cytoplasm. The catalysed reaction is [ThiI sulfur-carrier protein]-S-sulfanyl-L-cysteine + a uridine in tRNA + 2 reduced [2Fe-2S]-[ferredoxin] + ATP + H(+) = [ThiI sulfur-carrier protein]-L-cysteine + a 4-thiouridine in tRNA + 2 oxidized [2Fe-2S]-[ferredoxin] + AMP + diphosphate. The enzyme catalyses [ThiS sulfur-carrier protein]-C-terminal Gly-Gly-AMP + S-sulfanyl-L-cysteinyl-[cysteine desulfurase] + AH2 = [ThiS sulfur-carrier protein]-C-terminal-Gly-aminoethanethioate + L-cysteinyl-[cysteine desulfurase] + A + AMP + 2 H(+). The protein operates within cofactor biosynthesis; thiamine diphosphate biosynthesis. Functionally, catalyzes the ATP-dependent transfer of a sulfur to tRNA to produce 4-thiouridine in position 8 of tRNAs, which functions as a near-UV photosensor. Also catalyzes the transfer of sulfur to the sulfur carrier protein ThiS, forming ThiS-thiocarboxylate. This is a step in the synthesis of thiazole, in the thiamine biosynthesis pathway. The sulfur is donated as persulfide by IscS. The protein is tRNA sulfurtransferase of Klebsiella pneumoniae (strain 342).